A 557-amino-acid polypeptide reads, in one-letter code: Thermosome subunit 2 (557 aa).

The disordered stretch occupies residues 527 to 557 (DLSTGGDDDEEGGAPGGMGGMGGMGGMGGAM). Residues 539–557 (GAPGGMGGMGGMGGMGGAM) show a composition bias toward gly residues.

The protein belongs to the TCP-1 chaperonin family. The thermosome or CCT complex is a oligomeric complex of two octameric double-ring structures; the complex is probably a heterooligomer of CCT1, CCT2 and CCT3 with yet unknown stoichiometry.

Its function is as follows. Molecular chaperone that assists in the folding or refolding of nascent or denatured proteins along with ATP hydrolysis. ATPase activity is highest in thermosome assemblies containing CCT1:CCT2, followed by assemblies containing CCT1:CCT2:CCT3. Seems to contribute to thermosome ATPase activity. Not required for growth. The sequence is that of Thermosome subunit 2 (cct2) from Haloferax volcanii (strain ATCC 29605 / DSM 3757 / JCM 8879 / NBRC 14742 / NCIMB 2012 / VKM B-1768 / DS2) (Halobacterium volcanii).